Consider the following 203-residue polypeptide: Dephospho-CoA kinase (203 aa).

A DPCK domain is found at 3 to 202; the sequence is KIGLTGSIGM…MRIAKGDFRN (200 aa). 11–16 contributes to the ATP binding site; sequence GMGKST.

This sequence belongs to the CoaE family.

It localises to the cytoplasm. The enzyme catalyses 3'-dephospho-CoA + ATP = ADP + CoA + H(+). Its pathway is cofactor biosynthesis; coenzyme A biosynthesis; CoA from (R)-pantothenate: step 5/5. Functionally, catalyzes the phosphorylation of the 3'-hydroxyl group of dephosphocoenzyme A to form coenzyme A. The protein is Dephospho-CoA kinase of Rhizobium etli (strain ATCC 51251 / DSM 11541 / JCM 21823 / NBRC 15573 / CFN 42).